The chain runs to 1202 residues: Protein HASTY 1 (1202 aa).

Met1 is subject to N-acetylmethionine.

The protein belongs to the exportin family. Interacts with RAN1. As to expression, expressed in roots, leaves and floral buds.

It localises to the nucleus. Its function is as follows. Nucleocytoplasmic transporter involved in the nuclear export of microRNAs (miRNAs). Required for several miRNAs accumulation. Specifically required for miR156 accumulation which targets SPL3, SPL4 and SPL5 transcription factors. Involved in plant development through its role in miRNAs processing. Required for vegetative phase change and vegetative to reproductive phase transition. Functionally dependent on RAN1 binding. Does not seem to be involved in small interfering RNAs (siRNAs) processing. The protein is Protein HASTY 1 (HST1) of Arabidopsis thaliana (Mouse-ear cress).